A 180-amino-acid chain; its full sequence is NADH-quinone oxidoreductase subunit I (180 aa).

2 4Fe-4S ferredoxin-type domains span residues 44-74 (LNRYPDGLEKCIGCELCAWACPADAIYVEGA) and 90-119 (RVYQINYLRCIGCGLCIEACPTRALTMTTE). The [4Fe-4S] cluster site is built by Cys54, Cys57, Cys60, Cys64, Cys99, Cys102, Cys105, and Cys109. A disordered region spans residues 145–180 (MQAPPHDMAPGKTDDDYYLGNVTPITPVPSGTEDAR).

The protein belongs to the complex I 23 kDa subunit family. As to quaternary structure, NDH-1 is composed of 14 different subunits. Subunits NuoA, H, J, K, L, M, N constitute the membrane sector of the complex. The cofactor is [4Fe-4S] cluster.

The protein localises to the cell membrane. The enzyme catalyses a quinone + NADH + 5 H(+)(in) = a quinol + NAD(+) + 4 H(+)(out). NDH-1 shuttles electrons from NADH, via FMN and iron-sulfur (Fe-S) centers, to quinones in the respiratory chain. The immediate electron acceptor for the enzyme in this species is believed to be menaquinone. Couples the redox reaction to proton translocation (for every two electrons transferred, four hydrogen ions are translocated across the cytoplasmic membrane), and thus conserves the redox energy in a proton gradient. The protein is NADH-quinone oxidoreductase subunit I of Mycolicibacterium smegmatis (strain ATCC 700084 / mc(2)155) (Mycobacterium smegmatis).